The primary structure comprises 263 residues: Ribosomal RNA large subunit methyltransferase E (263 aa).

S-adenosyl-L-methionine is bound by residues glycine 50, tryptophan 52, aspartate 68, asparagine 84, and aspartate 109. Lysine 149 functions as the Proton acceptor in the catalytic mechanism. In terms of domain architecture, TRAM spans 196-254; it reads PLRKGDKFVVDIEKLGSSGDGAVLIEGFVVFVKEVEVGEKVRIKITDVKPNFAFADVAE.

Belongs to the class I-like SAM-binding methyltransferase superfamily. RNA methyltransferase RlmE family.

Its subcellular location is the cytoplasm. It catalyses the reaction uridine(2552) in 23S rRNA + S-adenosyl-L-methionine = 2'-O-methyluridine(2552) in 23S rRNA + S-adenosyl-L-homocysteine + H(+). Specifically methylates the uridine in position 2552 of 23S rRNA at the 2'-O position of the ribose in the fully assembled 50S ribosomal subunit. In Methanosarcina barkeri (strain Fusaro / DSM 804), this protein is Ribosomal RNA large subunit methyltransferase E.